A 332-amino-acid polypeptide reads, in one-letter code: Phosphoenolpyruvate transferase (332 aa).

D63 is a 7,8-didemethyl-8-hydroxy-5-deazariboflavin binding site.

The protein belongs to the CofD family. Homodimer. Mg(2+) is required as a cofactor.

It catalyses the reaction enolpyruvoyl-2-diphospho-5'-guanosine + 7,8-didemethyl-8-hydroxy-5-deazariboflavin = dehydro coenzyme F420-0 + GMP + H(+). It participates in cofactor biosynthesis; coenzyme F420 biosynthesis. In terms of biological role, catalyzes the transfer of the phosphoenolpyruvate moiety from enoylpyruvoyl-2-diphospho-5'-guanosine (EPPG) to 7,8-didemethyl-8-hydroxy-5-deazariboflavin (FO) with the formation of dehydro coenzyme F420-0 and GMP. This Nocardia farcinica (strain IFM 10152) protein is Phosphoenolpyruvate transferase.